We begin with the raw amino-acid sequence, 312 residues long: NAD(P)(+)--arginine ADP-ribosyltransferase 2 (312 aa).

The first 20 residues, 1–20, serve as a signal peptide directing secretion; sequence MELLALRWVLLAGTLLSTSA. A propeptide spanning residues 21–31 is cleaved from the precursor; sequence ASSALQEGDLG. Cystine bridges form between Cys51-Cys260 and Cys159-Cys208. One can recognise a TR mART core domain in the interval 71–256; the sequence is YAYAVGWRKA…IYLRSKGKMS (186 aa). Residues Tyr108, Arg164, and Gln183 each coordinate NAD(+). Arg164 is an active-site residue. Residue Ser186 is part of the active site. Ser217 is a binding site for NAD(+). Glu224 is an active-site residue. Residues 267-312 constitute a propeptide that is removed on maturation; the sequence is GGQWGRGHQEVGLGLSPGLALPVLPCSNCSCWGSGHRAGDPIPAAV.

Belongs to the Arg-specific ADP-ribosyltransferase family.

Its subcellular location is the secreted. It localises to the extracellular space. It carries out the reaction L-arginyl-[protein] + NAD(+) = N(omega)-(ADP-D-ribosyl)-L-arginyl-[protein] + nicotinamide + H(+). This is NAD(P)(+)--arginine ADP-ribosyltransferase 2 from Gallus gallus (Chicken).